The sequence spans 114 residues: MVISRAEIYWADLGPPSGSQPAKRRPVLVIQSDPYNASRLATVIAAVITSNTALAAMPGNVFLPATTTRLPRDSVVNVTAIVTLNKTDLTDRVGEVPASLMHEVDRGLRRVLDL.

Belongs to the PemK/MazF family. In terms of assembly, probably forms a complex with cognate antitoxin MazE2.

In terms of biological role, toxic component of a type II toxin-antitoxin (TA) system. Acts as an endoribonuclease on single-strand RNA, cleaving between the second and third bases in the sequences CUCCU and UUCCU. Neutralized by coexpression with cognate antitoxin MazE2. This is Endoribonuclease MazF2 (mazF2) from Mycobacterium bovis (strain ATCC BAA-935 / AF2122/97).